A 70-amino-acid polypeptide reads, in one-letter code: DNA-directed RNA polymerases I, II, and III subunit rpabc5 (70 aa).

Zn(2+)-binding residues include Cys7, Cys10, Cys44, and Cys45.

The protein belongs to the archaeal Rpo10/eukaryotic RPB10 RNA polymerase subunit family. Component of the RNA polymerase I (Pol I), RNA polymerase II (Pol II) and RNA polymerase III (Pol III) complexes.

It is found in the nucleus. Its function is as follows. DNA-dependent RNA polymerase catalyzes the transcription of DNA into RNA using the four ribonucleoside triphosphates as substrates. Common component of RNA polymerases I, II and III which synthesize ribosomal RNA precursors, mRNA precursors and many functional non-coding RNAs, and a small RNAs, such as 5S rRNA and tRNAs, respectively. Pol II is the central component of the basal RNA polymerase II transcription machinery. Pols are composed of mobile elements that move relative to each other. In Pol II, RBP10 is part of the core element with the central large cleft. In Dictyostelium discoideum (Social amoeba), this protein is DNA-directed RNA polymerases I, II, and III subunit rpabc5 (polr2l).